The following is a 198-amino-acid chain: Molybdenum cofactor guanylyltransferase (198 aa).

GTP contacts are provided by residues 14–16, lysine 27, aspartate 73, and aspartate 103; that span reads LAG. Aspartate 103 serves as a coordination point for Mg(2+).

The protein belongs to the MobA family. Monomer. The cofactor is Mg(2+).

It is found in the cytoplasm. It carries out the reaction Mo-molybdopterin + GTP + H(+) = Mo-molybdopterin guanine dinucleotide + diphosphate. Transfers a GMP moiety from GTP to Mo-molybdopterin (Mo-MPT) cofactor (Moco or molybdenum cofactor) to form Mo-molybdopterin guanine dinucleotide (Mo-MGD) cofactor. In Pseudomonas aeruginosa (strain LESB58), this protein is Molybdenum cofactor guanylyltransferase.